The sequence spans 370 residues: Quinolinate synthase (370 aa).

His62 and Ser83 together coordinate iminosuccinate. Cys128 contacts [4Fe-4S] cluster. Residues 154–156 (YAN) and Ser171 each bind iminosuccinate. Cys215 lines the [4Fe-4S] cluster pocket. Iminosuccinate is bound by residues 241-243 (HPE) and Thr258. A [4Fe-4S] cluster-binding site is contributed by Cys312.

Belongs to the quinolinate synthase family. Type 1 subfamily. It depends on [4Fe-4S] cluster as a cofactor.

The protein resides in the cytoplasm. It carries out the reaction iminosuccinate + dihydroxyacetone phosphate = quinolinate + phosphate + 2 H2O + H(+). The protein operates within cofactor biosynthesis; NAD(+) biosynthesis; quinolinate from iminoaspartate: step 1/1. In terms of biological role, catalyzes the condensation of iminoaspartate with dihydroxyacetone phosphate to form quinolinate. The chain is Quinolinate synthase from Neisseria meningitidis serogroup C (strain 053442).